A 128-amino-acid polypeptide reads, in one-letter code: Phosphoribosyl-AMP cyclohydrolase (128 aa).

D89 provides a ligand contact to Mg(2+). Zn(2+) is bound at residue C90. Residues D91 and D93 each coordinate Mg(2+). The Zn(2+) site is built by C106 and C113.

This sequence belongs to the PRA-CH family. As to quaternary structure, homodimer. Requires Mg(2+) as cofactor. Zn(2+) is required as a cofactor.

The protein localises to the cytoplasm. It catalyses the reaction 1-(5-phospho-beta-D-ribosyl)-5'-AMP + H2O = 1-(5-phospho-beta-D-ribosyl)-5-[(5-phospho-beta-D-ribosylamino)methylideneamino]imidazole-4-carboxamide. It functions in the pathway amino-acid biosynthesis; L-histidine biosynthesis; L-histidine from 5-phospho-alpha-D-ribose 1-diphosphate: step 3/9. Its function is as follows. Catalyzes the hydrolysis of the adenine ring of phosphoribosyl-AMP. The sequence is that of Phosphoribosyl-AMP cyclohydrolase from Pyrobaculum calidifontis (strain DSM 21063 / JCM 11548 / VA1).